The primary structure comprises 1171 residues: DExH-box ATP-dependent RNA helicase DExH15 chloroplastic (1171 aa).

The N-terminal 58 residues, 1-58 (MNTLPVVSLTASSSFKFFHFPSLHRSLSHSPNFSFTKSLILNPNHLSFKSTLNSLSPS), are a transit peptide targeting the chloroplast. Residues 53–62 (NSLSPSQSQL) are compositionally biased toward polar residues. Residues 53 to 111 (NSLSPSQSQLYEEEDDEEEEEEDEDDDDEAADEYDNISDEIRNSDDDDDDEETEFSVDL) form a disordered region. Acidic residues-rich tracts occupy residues 63-90 (YEEE…DNIS) and 97-107 (DDDDDDEETEF). Residues 163-327 (IEAFLRGSSV…WIGEIHGKTE (165 aa)) form the Helicase ATP-binding domain. 176–183 (APTSSGKT) contacts ATP. The DEVH box signature appears at 275 to 278 (DEVH). The region spanning 424 to 620 (QISDTLWHLQ…ASYGMVLNLV (197 aa)) is the Helicase C-terminal domain.

This sequence belongs to the DExH box helicase family.

Its subcellular location is the plastid. It localises to the chloroplast. The protein resides in the cytoplasmic granule. It carries out the reaction ATP + H2O = ADP + phosphate + H(+). In terms of biological role, RNA helicase involved in group II intron splicing. Essential protein required during embryogenesis. Involved in post-transcriptional gene silencing. Modulates the determination of cell fate. Necessary for normal plasmodesmata (PD) development and aperture regulation. This is DExH-box ATP-dependent RNA helicase DExH15 chloroplastic (ISE2) from Arabidopsis thaliana (Mouse-ear cress).